Here is a 331-residue protein sequence, read N- to C-terminus: CRISPR-associated endonuclease Cas1 1 (331 aa).

3 residues coordinate Mn(2+): Glu161, His226, and Glu241.

This sequence belongs to the CRISPR-associated endonuclease Cas1 family. As to quaternary structure, homodimer, forms a heterotetramer with a Cas2 homodimer. Requires Mg(2+) as cofactor. It depends on Mn(2+) as a cofactor.

Functionally, CRISPR (clustered regularly interspaced short palindromic repeat), is an adaptive immune system that provides protection against mobile genetic elements (viruses, transposable elements and conjugative plasmids). CRISPR clusters contain spacers, sequences complementary to antecedent mobile elements, and target invading nucleic acids. CRISPR clusters are transcribed and processed into CRISPR RNA (crRNA). Acts as a dsDNA endonuclease. Involved in the integration of spacer DNA into the CRISPR cassette. The polypeptide is CRISPR-associated endonuclease Cas1 1 (Methanospirillum hungatei JF-1 (strain ATCC 27890 / DSM 864 / NBRC 100397 / JF-1)).